The chain runs to 598 residues: Nuclear receptor subfamily 4 group A member 2 (598 aa).

A disordered region spans residues 1–22; it reads MPCVQAQYGSSPQGASPASQSY. The segment covering 8–22 has biased composition (low complexity); sequence YGSSPQGASPASQSY. The segment at residues 260-335 is a DNA-binding region (nuclear receptor); sequence EGLCAVCGDN…VGMVKEVVRT (76 aa). NR C4-type zinc fingers lie at residues 263–283 and 299–323; these read CAVCGDNAACQHYGVRTCEGC and CLANKNCPVDKRRRNRCQYCRFQKC. A Bipartite nuclear localization signal (NLS1) motif is present at residues 287–314; that stretch reads FKRTVQKNAKYVCLANKNCPVDKRRRNR. The tract at residues 337–361 is disordered; the sequence is SLKGRRGRLPSKPKSPQDPSPPSPP. Positions 338 to 350 match the Nuclear localization signal (NLS1) motif; sequence LKGRRGRLPSKPK. Over residues 352–361 the composition is skewed to pro residues; sequence PQDPSPPSPP. Positions 360–595 constitute an NR LBD domain; sequence PPVSLISALV…AIIDKLFLDT (236 aa). Positions 443–452 match the nuclear export sequence (NES1) motif; that stretch reads FLELFVLRLA. The short motif at 568–577 is the nuclear export sequence (NES2) element; the sequence is QGLQRIFYLK.

This sequence belongs to the nuclear hormone receptor family. NR4 subfamily. In terms of assembly, interacts with SFPQ, NCOR2, SIN3A and HADC1. The interaction with NCOR2 increases in the absence of PITX3. Interacts with PER2. As to expression, brain.

The protein resides in the cytoplasm. It is found in the nucleus. Functionally, transcriptional regulator which is important for the differentiation and maintenance of meso-diencephalic dopaminergic (mdDA) neurons during development. It is crucial for expression of a set of genes such as SLC6A3, SLC18A2, TH and DRD2 which are essential for development of mdDA neurons. In Mus musculus (Mouse), this protein is Nuclear receptor subfamily 4 group A member 2 (Nr4a2).